Reading from the N-terminus, the 1334-residue chain is Rho1 guanine nucleotide exchange factor 1 (1334 aa).

Disordered regions lie at residues 1–89 (MDYR…ASPV), 135–182 (PQVS…SDSV), 203–245 (LDQN…TSGT), and 381–402 (SLIN…ASSP). Low complexity predominate over residues 138–149 (SNHAPNNSNSPS). A compositionally biased stretch (polar residues) spans 150–164 (LTWHTSSGDDSNQNP). Over residues 170–180 (QSQSSTSPVSD) the composition is skewed to low complexity. 3 stretches are compositionally biased toward polar residues: residues 213–227 (VRSS…NSRL), 234–245 (HTVGSHSFTSGT), and 381–400 (SLIN…SEAS). Ser381 bears the Phosphoserine mark. The DH domain occupies 621-808 (KRQEVICEVI…RGFLSRLNVE (188 aa)). The 131-residue stretch at 843-973 (QLIFKGPLKK…WLEHIDNQQT (131 aa)) folds into the PH domain. In terms of domain architecture, CNH spans 995–1293 (DNKVNAIGVY…RLLADGRGKL (299 aa)).

Its subcellular location is the cytoplasm. Stimulates the exchange of Rho1 and Rho5 GDP-bound form into GTP-bound form. Controls septum formation, cell wall synthesis and localization of F-actin patches. Coordinates actin deposition with cell wall biosynthesis during bipolar growth. The sequence is that of Rho1 guanine nucleotide exchange factor 1 (rgf1) from Schizosaccharomyces pombe (strain 972 / ATCC 24843) (Fission yeast).